The sequence spans 366 residues: Ribosomal RNA large subunit methyltransferase M (366 aa).

S-adenosyl-L-methionine-binding positions include Ser-188, 221–224 (CPGG), Asp-240, Asp-260, and Asp-277. The Proton acceptor role is filled by Lys-306.

Belongs to the class I-like SAM-binding methyltransferase superfamily. RNA methyltransferase RlmE family. RlmM subfamily. As to quaternary structure, monomer.

The protein resides in the cytoplasm. It catalyses the reaction cytidine(2498) in 23S rRNA + S-adenosyl-L-methionine = 2'-O-methylcytidine(2498) in 23S rRNA + S-adenosyl-L-homocysteine + H(+). In terms of biological role, catalyzes the 2'-O-methylation at nucleotide C2498 in 23S rRNA. The sequence is that of Ribosomal RNA large subunit methyltransferase M from Dickeya chrysanthemi (strain Ech1591) (Dickeya zeae (strain Ech1591)).